Consider the following 206-residue polypeptide: Glycerol-3-phosphate acyltransferase (206 aa).

6 helical membrane passes run Ile6–Phe26, Lys57–Ala77, Phe86–Trp106, Val118–Leu138, Ile143–Leu163, and Glu165–Trp185.

This sequence belongs to the PlsY family. As to quaternary structure, probably interacts with PlsX.

Its subcellular location is the cell inner membrane. The catalysed reaction is an acyl phosphate + sn-glycerol 3-phosphate = a 1-acyl-sn-glycero-3-phosphate + phosphate. It participates in lipid metabolism; phospholipid metabolism. In terms of biological role, catalyzes the transfer of an acyl group from acyl-phosphate (acyl-PO(4)) to glycerol-3-phosphate (G3P) to form lysophosphatidic acid (LPA). This enzyme utilizes acyl-phosphate as fatty acyl donor, but not acyl-CoA or acyl-ACP. This Prochlorococcus marinus (strain MIT 9211) protein is Glycerol-3-phosphate acyltransferase.